A 921-amino-acid chain; its full sequence is Isoleucine--tRNA ligase (921 aa).

Residues 57–67 carry the 'HIGH' region motif; that stretch reads PYANGNIHVGT. L-isoleucyl-5'-AMP is bound at residue Glu551. The 'KMSKS' region signature appears at 592-596; the sequence is KMSKS. An ATP-binding site is contributed by Lys595. Zn(2+) is bound by residues Cys885, Cys888, Cys905, and Cys908.

Belongs to the class-I aminoacyl-tRNA synthetase family. IleS type 1 subfamily. As to quaternary structure, monomer. The cofactor is Zn(2+).

It is found in the cytoplasm. It carries out the reaction tRNA(Ile) + L-isoleucine + ATP = L-isoleucyl-tRNA(Ile) + AMP + diphosphate. Functionally, catalyzes the attachment of isoleucine to tRNA(Ile). As IleRS can inadvertently accommodate and process structurally similar amino acids such as valine, to avoid such errors it has two additional distinct tRNA(Ile)-dependent editing activities. One activity is designated as 'pretransfer' editing and involves the hydrolysis of activated Val-AMP. The other activity is designated 'posttransfer' editing and involves deacylation of mischarged Val-tRNA(Ile). This is Isoleucine--tRNA ligase from Kosmotoga olearia (strain ATCC BAA-1733 / DSM 21960 / TBF 19.5.1).